The primary structure comprises 549 residues: YTH domain-containing family protein 1 (549 aa).

5 disordered regions span residues 29 to 102 (QAPW…QPNM), 139 to 165 (GHPP…RQSG), 243 to 262 (GASG…QQAV), 273 to 298 (DSTE…AKGP), and 425 to 458 (REDS…SENK). The span at 49-61 (VVGQTQSSPQYNG) shows a compositional bias: polar residues. The span at 71–102 (QGYYMPQQQQQQQQMPQYYGGPMSPSQPQPNM) shows a compositional bias: low complexity. Polar residues-rich tracts occupy residues 251 to 260 (TGPSATTPQQ) and 273 to 289 (DSTE…TPTA). A YTH domain is found at 307–513 (DRFFVLKSLT…SVGRRLIGLF (207 aa)).

Belongs to the YTHDF family. YTHDF1 subfamily.

Its function is as follows. Specifically recognizes and binds N6-methyladenosine (m6A)-containing mRNAs, and regulates their stability. M6A is a modification present at internal sites of mRNAs and some non-coding RNAs and plays a role in mRNA stability and processing. Directly interacts with the acid phosphatase APHA mRNA to increase its stability. This Cryphonectria parasitica (strain ATCC 38755 / EP155) protein is YTH domain-containing family protein 1.